Reading from the N-terminus, the 635-residue chain is Protein OPG056 (635 aa).

This sequence belongs to the orthopoxvirus OPG056 family. Interacts with protein OPG164. Interacts with protein OPG064.

It is found in the virion membrane. It localises to the host endosome. In terms of biological role, plays a role in intracellular enveloped virus (IEV) transport to the cell surface through microtubule transport. Together with protein OPG064, forms a complex that interacts with host KLC2 (kinesin light chain isoform 2) to engage the kinesin-1 complex and thereby promote IEV trafficking. The polypeptide is Protein OPG056 (OPG056) (Homo sapiens (Human)).